A 220-amino-acid polypeptide reads, in one-letter code: Octanoyltransferase (220 aa).

The BPL/LPL catalytic domain maps to 27 to 208 (PGTADEIWLC…QLARAHGQAV (182 aa)). Substrate is bound by residues 66 to 73 (RGGQVTYH), 139 to 141 (ALG), and 152 to 154 (GLA). Residue Cys-170 is the Acyl-thioester intermediate of the active site.

The protein belongs to the LipB family.

It is found in the cytoplasm. The enzyme catalyses octanoyl-[ACP] + L-lysyl-[protein] = N(6)-octanoyl-L-lysyl-[protein] + holo-[ACP] + H(+). Its pathway is protein modification; protein lipoylation via endogenous pathway; protein N(6)-(lipoyl)lysine from octanoyl-[acyl-carrier-protein]: step 1/2. Catalyzes the transfer of endogenously produced octanoic acid from octanoyl-acyl-carrier-protein onto the lipoyl domains of lipoate-dependent enzymes. Lipoyl-ACP can also act as a substrate although octanoyl-ACP is likely to be the physiological substrate. This chain is Octanoyltransferase, found in Bordetella bronchiseptica (strain ATCC BAA-588 / NCTC 13252 / RB50) (Alcaligenes bronchisepticus).